The sequence spans 375 residues: MSTEEQNGVPLQRGSEFIADDVTSNKSNNTRRMLVKEYRKIGRGAFGTVVQAYLTQDKKNWLGPFAIKKVPAHTEYKSRELQILRIADHPNIVKLQYFFTHLSPQDNKVYQHLAMECLPETLQIEINRYVTNKLEMPLKHIRLYTYQIARGMLYLHGLGVCHRDIKPSNVLVDPETGVLKICDFGSAKKLEHNQPSISYICSRFYRAPELIIGCTQYTTQIDIWGLGCVMGEMLIGKAIFQGQEPLLQLREIAKLLGPPDKRFIFFSNPAYDGPLFSKPLFSGSSQQRFEKYFGHSGPDGIDLLMKILVYEPQQRLSPRRILAHQFFNELRNDDTFLPRGFTEPIKLPNLFDFNDFELQILGEFADKIKPTKVAE.

Ser2 carries the N-acetylserine modification. In terms of domain architecture, Protein kinase spans 35–327 (VKEYRKIGRG…PRRILAHQFF (293 aa)). ATP contacts are provided by residues 41–49 (IGRGAFGTV) and Lys68. Asp164 functions as the Proton acceptor in the catalytic mechanism. A Phosphoserine modification is found at Ser198. At Tyr199 the chain carries Phosphotyrosine. Ser202 carries the post-translational modification Phosphoserine.

The protein belongs to the protein kinase superfamily. Ser/Thr protein kinase family. In terms of processing, phosphorylated at tyrosine and serine.

The catalysed reaction is L-seryl-[protein] + ATP = O-phospho-L-seryl-[protein] + ADP + H(+). The enzyme catalyses L-threonyl-[protein] + ATP = O-phospho-L-threonyl-[protein] + ADP + H(+). It catalyses the reaction L-tyrosyl-[protein] + ATP = O-phospho-L-tyrosyl-[protein] + ADP + H(+). Its function is as follows. May be an autophosphorylating tyrosine kinase, a bifunctional (serine/tyrosine-specific) protein kinase, or a serine kinase that is a substrate for an associated tyrosine kinase. MCK1 is a transcriptional activator of IME1, it stimulates spore maturation, and play a positive regulatory role in both mitotic centromere function and activation of early meiotic gene expression. The chain is Protein kinase MCK1 (MCK1) from Saccharomyces cerevisiae (strain ATCC 204508 / S288c) (Baker's yeast).